A 187-amino-acid chain; its full sequence is CASP-like protein 2C1 (187 aa).

At 1–14 (MVAAARVVSGVKAE) the chain is on the cytoplasmic side. A helical transmembrane segment spans residues 15–35 (GLLRGACAALAAAAALLLGLS). The Extracellular segment spans residues 36-54 (TQTETVLLVRKKGTVKDVQ). A helical membrane pass occupies residues 55–75 (ALWVLAMAAASAAGYHLLQLL). Residues 76–97 (KCLYLGRGGGRALAWTCLLLDK) are Cytoplasmic-facing. A helical membrane pass occupies residues 98–118 (ACAYATFATTVAAAQACVVAL). Residues 119–139 (DGAHALQWTKLCNIYTRFCEQ) lie on the Extracellular side of the membrane. Residues 140–160 (VAGSLVLGMLAAVGTAVLSAA) form a helical membrane-spanning segment. Over 161–187 (SARNVFRHYYCSSHSPPAPPPETCDAH) the chain is Cytoplasmic.

Belongs to the Casparian strip membrane proteins (CASP) family. In terms of assembly, homodimer and heterodimers.

It is found in the cell membrane. The protein is CASP-like protein 2C1 of Zea mays (Maize).